Here is a 296-residue protein sequence, read N- to C-terminus: Nucleotide-binding protein RSc0403 (296 aa).

8-15 (GMSGSGKS) provides a ligand contact to ATP. Position 57–60 (57–60 (DIRS)) interacts with GTP. Positions 99-124 (TRRRHPLSIRNGRPDAGNPPSAAKGP) are disordered.

It belongs to the RapZ-like family.

Its function is as follows. Displays ATPase and GTPase activities. The sequence is that of Nucleotide-binding protein RSc0403 from Ralstonia nicotianae (strain ATCC BAA-1114 / GMI1000) (Ralstonia solanacearum).